Consider the following 399-residue polypeptide: Acetylornithine aminotransferase (399 aa).

Pyridoxal 5'-phosphate contacts are provided by residues 102–103 and F135; that span reads GA. Residue R138 participates in N(2)-acetyl-L-ornithine binding. 220–223 is a pyridoxal 5'-phosphate binding site; it reads DEIQ. Residue K249 is modified to N6-(pyridoxal phosphate)lysine. S277 is a N(2)-acetyl-L-ornithine binding site. A pyridoxal 5'-phosphate-binding site is contributed by T278.

It belongs to the class-III pyridoxal-phosphate-dependent aminotransferase family. ArgD subfamily. As to quaternary structure, homodimer. Pyridoxal 5'-phosphate is required as a cofactor.

The protein resides in the cytoplasm. The enzyme catalyses N(2)-acetyl-L-ornithine + 2-oxoglutarate = N-acetyl-L-glutamate 5-semialdehyde + L-glutamate. It functions in the pathway amino-acid biosynthesis; L-arginine biosynthesis; N(2)-acetyl-L-ornithine from L-glutamate: step 4/4. In Oceanobacillus iheyensis (strain DSM 14371 / CIP 107618 / JCM 11309 / KCTC 3954 / HTE831), this protein is Acetylornithine aminotransferase.